A 446-amino-acid polypeptide reads, in one-letter code: MSGYEVNFDGLVGLTHHYAGLSFGNEASTQHQNSVSNPKLAAKQGLLKMKALADLGFQQGVLPPQERPHVPMLRKLGFSGSDESVLAQAMQQSPRLLSALSSASCMWTANAATVSPSADSADGKVHFTAANLNNKFHRAIEAETTSGVLRAMFNDPRHFAHHEALPQVALFGDEGAANHNRLGGDYGKRSVQMFVYGRQEFGGEIAPTRYPARQTREAGEAIARLHQLDEQHTVFVQQNPEVIDQGVFHNDVIAVSNQNVLFHHQQAFYRQQQALDEVRRKMATLDSELVAIEVPTTRVSVADAVATYLFNSQILTKPNGKMMIVVPEESRQHSGVWSYLSEMVASGGPIDEIKVFDLRESMRNGGGPACLRLRVALNEQELRAVNPRVMMNDSLFITLNEWVDRYYRDRLTQNDLADPQLLREGREALDSLTTILGLGSVYPFQQ.

Residues 19-28 (AGLSFGNEAS), N110, and 137-138 (HR) contribute to the substrate site. E174 is an active-site residue. R213 contacts substrate. The active site involves H249. Substrate-binding residues include D251 and N364. Catalysis depends on C370, which acts as the Nucleophile.

This sequence belongs to the succinylarginine dihydrolase family. In terms of assembly, homodimer.

The catalysed reaction is N(2)-succinyl-L-arginine + 2 H2O + 2 H(+) = N(2)-succinyl-L-ornithine + 2 NH4(+) + CO2. It functions in the pathway amino-acid degradation; L-arginine degradation via AST pathway; L-glutamate and succinate from L-arginine: step 2/5. Its function is as follows. Catalyzes the hydrolysis of N(2)-succinylarginine into N(2)-succinylornithine, ammonia and CO(2). The polypeptide is N-succinylarginine dihydrolase (Serratia proteamaculans (strain 568)).